The primary structure comprises 438 residues: Methyl-coenzyme M reductase subunit beta (438 aa).

Y367 provides a ligand contact to coenzyme M. Position 369 (G369) interacts with coenzyme B.

Belongs to the methyl-coenzyme M reductase beta subunit family. In terms of assembly, MCR is a hexamer of two alpha, two beta, and two gamma chains, forming a dimer of heterotrimers. Requires coenzyme F430 as cofactor.

It localises to the cytoplasm. The catalysed reaction is coenzyme B + methyl-coenzyme M = methane + coenzyme M-coenzyme B heterodisulfide. Its pathway is one-carbon metabolism; methyl-coenzyme M reduction; methane from methyl-coenzyme M: step 1/1. Its function is as follows. Component of the methyl-coenzyme M reductase (MCR) I that catalyzes the reductive cleavage of methyl-coenzyme M (CoM-S-CH3 or 2-(methylthio)ethanesulfonate) using coenzyme B (CoB or 7-mercaptoheptanoylthreonine phosphate) as reductant which results in the production of methane and the mixed heterodisulfide of CoB and CoM (CoM-S-S-CoB). This is the final step in methanogenesis. This Methanothermus fervidus protein is Methyl-coenzyme M reductase subunit beta (mcrB).